A 282-amino-acid chain; its full sequence is NADPH-dependent 7-cyano-7-deazaguanine reductase (282 aa).

82-84 (IES) provides a ligand contact to substrate. 84 to 85 (SK) provides a ligand contact to NADPH. Cysteine 189 functions as the Thioimide intermediate in the catalytic mechanism. The active-site Proton donor is the aspartate 196. 228 to 229 (HE) contacts substrate. 257 to 258 (RG) is an NADPH binding site.

This sequence belongs to the GTP cyclohydrolase I family. QueF type 2 subfamily. As to quaternary structure, homodimer.

It is found in the cytoplasm. The enzyme catalyses 7-aminomethyl-7-carbaguanine + 2 NADP(+) = 7-cyano-7-deazaguanine + 2 NADPH + 3 H(+). It participates in tRNA modification; tRNA-queuosine biosynthesis. In terms of biological role, catalyzes the NADPH-dependent reduction of 7-cyano-7-deazaguanine (preQ0) to 7-aminomethyl-7-deazaguanine (preQ1). This chain is NADPH-dependent 7-cyano-7-deazaguanine reductase, found in Delftia acidovorans (strain DSM 14801 / SPH-1).